The chain runs to 69 residues: UPF0150 protein Ta0767 (69 aa).

Belongs to the UPF0150 family.

This Thermoplasma acidophilum (strain ATCC 25905 / DSM 1728 / JCM 9062 / NBRC 15155 / AMRC-C165) protein is UPF0150 protein Ta0767.